We begin with the raw amino-acid sequence, 218 residues long: Large ribosomal subunit protein uL3 (218 aa).

Residues 121-163 (GYQKRHGFSRGPMTHGSKNHREPGSIGPGTTPGRIYPGKRMAG) are disordered.

The protein belongs to the universal ribosomal protein uL3 family. In terms of assembly, part of the 50S ribosomal subunit. Forms a cluster with proteins L14 and L19.

Functionally, one of the primary rRNA binding proteins, it binds directly near the 3'-end of the 23S rRNA, where it nucleates assembly of the 50S subunit. This chain is Large ribosomal subunit protein uL3, found in Parasynechococcus marenigrum (strain WH8102).